The chain runs to 343 residues: Dihydroorotase (343 aa).

Residues histidine 13 and histidine 15 each contribute to the Zn(2+) site. Residues 15–17 and asparagine 41 each bind substrate; that span reads HLR. Positions 99, 136, and 174 each coordinate Zn(2+). The residue at position 99 (lysine 99) is an N6-carboxylysine. Histidine 136 provides a ligand contact to substrate. Residue leucine 219 coordinates substrate. Position 247 (aspartate 247) interacts with Zn(2+). Residue aspartate 247 is part of the active site. Residues histidine 251 and alanine 263 each coordinate substrate.

It belongs to the metallo-dependent hydrolases superfamily. DHOase family. Class II DHOase subfamily. Homodimer. Zn(2+) is required as a cofactor.

The catalysed reaction is (S)-dihydroorotate + H2O = N-carbamoyl-L-aspartate + H(+). It functions in the pathway pyrimidine metabolism; UMP biosynthesis via de novo pathway; (S)-dihydroorotate from bicarbonate: step 3/3. Functionally, catalyzes the reversible cyclization of carbamoyl aspartate to dihydroorotate. The protein is Dihydroorotase of Shewanella putrefaciens (strain CN-32 / ATCC BAA-453).